The primary structure comprises 305 residues: UDP-N-acetylenolpyruvoylglucosamine reductase 2 (305 aa).

The FAD-binding PCMH-type domain maps to 33-197; sequence VGGKADVFVA…LEARFELEEG (165 aa). R176 is a catalytic residue. Residue S226 is the Proton donor of the active site. The active site involves E296.

The protein belongs to the MurB family. FAD serves as cofactor.

The protein localises to the cytoplasm. It catalyses the reaction UDP-N-acetyl-alpha-D-muramate + NADP(+) = UDP-N-acetyl-3-O-(1-carboxyvinyl)-alpha-D-glucosamine + NADPH + H(+). The protein operates within cell wall biogenesis; peptidoglycan biosynthesis. Functionally, cell wall formation. In Bacillus cereus (strain ATCC 14579 / DSM 31 / CCUG 7414 / JCM 2152 / NBRC 15305 / NCIMB 9373 / NCTC 2599 / NRRL B-3711), this protein is UDP-N-acetylenolpyruvoylglucosamine reductase 2 (murB2).